A 69-amino-acid chain; its full sequence is Large ribosomal subunit protein bL31 (69 aa).

The Zn(2+) site is built by Cys-16, Cys-18, Cys-37, and Cys-40.

It belongs to the bacterial ribosomal protein bL31 family. Type A subfamily. As to quaternary structure, part of the 50S ribosomal subunit. The cofactor is Zn(2+).

Functionally, binds the 23S rRNA. This Syntrophotalea carbinolica (strain DSM 2380 / NBRC 103641 / GraBd1) (Pelobacter carbinolicus) protein is Large ribosomal subunit protein bL31.